A 397-amino-acid chain; its full sequence is Phosphopentomutase (397 aa).

The Mn(2+) site is built by D10, D296, H301, D337, H338, and H349.

The protein belongs to the phosphopentomutase family. The cofactor is Mn(2+).

It localises to the cytoplasm. The catalysed reaction is 2-deoxy-alpha-D-ribose 1-phosphate = 2-deoxy-D-ribose 5-phosphate. The enzyme catalyses alpha-D-ribose 1-phosphate = D-ribose 5-phosphate. Its pathway is carbohydrate degradation; 2-deoxy-D-ribose 1-phosphate degradation; D-glyceraldehyde 3-phosphate and acetaldehyde from 2-deoxy-alpha-D-ribose 1-phosphate: step 1/2. In terms of biological role, isomerase that catalyzes the conversion of deoxy-ribose 1-phosphate (dRib-1-P) and ribose 1-phosphate (Rib-1-P) to deoxy-ribose 5-phosphate (dRib-5-P) and ribose 5-phosphate (Rib-5-P), respectively. The chain is Phosphopentomutase from Elusimicrobium minutum (strain Pei191).